Reading from the N-terminus, the 227-residue chain is Cytochrome c oxidase subunit 2 (227 aa).

Residues 1–14 (MAHPVQLGLQDATS) lie on the Mitochondrial intermembrane side of the membrane. The helical transmembrane segment at 15–45 (PVMEELITFHDYALMTISLISFLVLYALFST) threads the bilayer. Residues 46–59 (LTTKLTNTNITDAQ) lie on the Mitochondrial matrix side of the membrane. The chain crosses the membrane as a helical span at residues 60–87 (EMETTWTILPAVILILIALPSLRILYLT). Over 88-227 (DEINNPSFTI…IFEMGPVFTL (140 aa)) the chain is Mitochondrial intermembrane. Cu cation contacts are provided by His161, Cys196, Glu198, Cys200, His204, and Met207. A Mg(2+)-binding site is contributed by Glu198.

The protein belongs to the cytochrome c oxidase subunit 2 family. In terms of assembly, component of the cytochrome c oxidase (complex IV, CIV), a multisubunit enzyme composed of 14 subunits. The complex is composed of a catalytic core of 3 subunits MT-CO1, MT-CO2 and MT-CO3, encoded in the mitochondrial DNA, and 11 supernumerary subunits COX4I, COX5A, COX5B, COX6A, COX6B, COX6C, COX7A, COX7B, COX7C, COX8 and NDUFA4, which are encoded in the nuclear genome. The complex exists as a monomer or a dimer and forms supercomplexes (SCs) in the inner mitochondrial membrane with NADH-ubiquinone oxidoreductase (complex I, CI) and ubiquinol-cytochrome c oxidoreductase (cytochrome b-c1 complex, complex III, CIII), resulting in different assemblies (supercomplex SCI(1)III(2)IV(1) and megacomplex MCI(2)III(2)IV(2)). Found in a complex with TMEM177, COA6, COX18, COX20, SCO1 and SCO2. Interacts with TMEM177 in a COX20-dependent manner. Interacts with COX20. Interacts with COX16. Cu cation serves as cofactor.

The protein resides in the mitochondrion inner membrane. It catalyses the reaction 4 Fe(II)-[cytochrome c] + O2 + 8 H(+)(in) = 4 Fe(III)-[cytochrome c] + 2 H2O + 4 H(+)(out). Its function is as follows. Component of the cytochrome c oxidase, the last enzyme in the mitochondrial electron transport chain which drives oxidative phosphorylation. The respiratory chain contains 3 multisubunit complexes succinate dehydrogenase (complex II, CII), ubiquinol-cytochrome c oxidoreductase (cytochrome b-c1 complex, complex III, CIII) and cytochrome c oxidase (complex IV, CIV), that cooperate to transfer electrons derived from NADH and succinate to molecular oxygen, creating an electrochemical gradient over the inner membrane that drives transmembrane transport and the ATP synthase. Cytochrome c oxidase is the component of the respiratory chain that catalyzes the reduction of oxygen to water. Electrons originating from reduced cytochrome c in the intermembrane space (IMS) are transferred via the dinuclear copper A center (CU(A)) of subunit 2 and heme A of subunit 1 to the active site in subunit 1, a binuclear center (BNC) formed by heme A3 and copper B (CU(B)). The BNC reduces molecular oxygen to 2 water molecules using 4 electrons from cytochrome c in the IMS and 4 protons from the mitochondrial matrix. In Chlorocebus aethiops (Green monkey), this protein is Cytochrome c oxidase subunit 2 (MT-CO2).